A 268-amino-acid chain; its full sequence is Oxygen-evolving enhancer protein 2-1, chloroplastic (268 aa).

A chloroplast-targeting transit peptide spans 1–82 (MASTQCFLHQ…IGSKVSPADA (82 aa)).

Belongs to the PsbP family.

Its subcellular location is the plastid. It localises to the chloroplast thylakoid membrane. May be involved in the regulation of photosystem II. This chain is Oxygen-evolving enhancer protein 2-1, chloroplastic (PSBP1), found in Nicotiana tabacum (Common tobacco).